Here is a 192-residue protein sequence, read N- to C-terminus: uncharacterized protein (192 aa).

The Nudix hydrolase domain maps to 29-160 (HRQAAVLIPI…PLDIYRRGDS (132 aa)). A Nudix box motif is present at residues 67–89 (GAVDDTDASVIAAALREAEEEVA). Residues E83 and E87 each coordinate Mg(2+).

The protein belongs to the Nudix hydrolase family. PCD1 subfamily. Mn(2+) serves as cofactor. Requires Mg(2+) as cofactor.

Probably mediates the hydrolysis of some nucleoside diphosphate derivatives. This is an uncharacterized protein from Escherichia coli (strain SMS-3-5 / SECEC).